The primary structure comprises 78 residues: Small ribosomal subunit protein bS16c (78 aa).

This sequence belongs to the bacterial ribosomal protein bS16 family.

It is found in the plastid. Its subcellular location is the chloroplast. The chain is Small ribosomal subunit protein bS16c from Phaeodactylum tricornutum (strain CCAP 1055/1).